The sequence spans 552 residues: Putative transport protein APL_0966 (552 aa).

A run of 5 helical transmembrane segments spans residues 4 to 24 (IAII…IGHI), 29 to 49 (VGLG…CTHL), 65 to 85 (FGLI…FFAS), 95 to 115 (GFAV…HKLF), and 161 to 181 (IAYP…RIIF). 2 consecutive RCK C-terminal domains span residues 190 to 275 (QEFD…ILGE) and 277 to 360 (ADVS…IIGD). Transmembrane regions (helical) follow at residues 370-390 (MLPI…PLYI), 402-424 (AGGP…LYWF), 438-458 (IVLF…DTLL), 463-483 (LAWM…TGFV), 492-512 (YLSL…LAFA), and 529-549 (VYPL…ILLW).

It belongs to the AAE transporter (TC 2.A.81) family. YidE subfamily.

Its subcellular location is the cell membrane. In Actinobacillus pleuropneumoniae serotype 5b (strain L20), this protein is Putative transport protein APL_0966.